A 363-amino-acid polypeptide reads, in one-letter code: MTYTSGRILGSMCTSSHPLARRVYCDFLESNLGDPGLFRGTRELESGVIGMLGELLSEPDAAGHIITGGTEANLMAMRAARNMAGAEKPEIIVPKSAHFSFRKAADILGLRLREAELDQDYRVDVESVRKLISENTVAVVGVAGTTELGRIDPVEELSEICLDEDIHLHIDAAFGGFIIPFLRETGAELPEFDFKLQGVSSITVDPHKMGLAPIPSGCILFRDASYLDAMSIETPYLTEKQQSTIVGTRTGASAAATWAIMKHMGREGYRKLALRVMGVTRRLRDGLVELDYQLVVEPELNIVAFNHPAMGPHELADRLEELGWAVSVSSCPPAIRVVLMPHIMEEHIELLLRDLEGIRLREE.

Lys208 carries the post-translational modification N6-(pyridoxal phosphate)lysine.

The protein belongs to the group II decarboxylase family. MfnA subfamily. The cofactor is pyridoxal 5'-phosphate.

It catalyses the reaction L-tyrosine + H(+) = tyramine + CO2. The catalysed reaction is L-aspartate + H(+) = beta-alanine + CO2. It functions in the pathway cofactor biosynthesis; methanofuran biosynthesis. Its pathway is cofactor biosynthesis; coenzyme A biosynthesis. Its function is as follows. Catalyzes the decarboxylation of L-tyrosine to produce tyramine for methanofuran biosynthesis. Can also catalyze the decarboxylation of L-aspartate to produce beta-alanine for coenzyme A (CoA) biosynthesis. This Methanothermobacter thermautotrophicus (strain ATCC 29096 / DSM 1053 / JCM 10044 / NBRC 100330 / Delta H) (Methanobacterium thermoautotrophicum) protein is Probable L-tyrosine/L-aspartate decarboxylase.